We begin with the raw amino-acid sequence, 263 residues long: UPF0758 protein NGR_c13970 (263 aa).

The region spanning 141-263 (VLSSWSAVID…HVSMKGLRLF (123 aa)) is the MPN domain. Residues His-212, His-214, and Asp-225 each coordinate Zn(2+). Positions 212–225 (HNHPSGDPTPSRAD) match the JAMM motif motif.

The protein belongs to the UPF0758 family.

This Sinorhizobium fredii (strain NBRC 101917 / NGR234) protein is UPF0758 protein NGR_c13970.